Reading from the N-terminus, the 221-residue chain is Penicillin-binding protein activator LpoB (221 aa).

An N-terminal signal peptide occupies residues Met1–Gly20. Cys21 carries the N-palmitoyl cysteine lipid modification. Cys21 carries S-diacylglycerol cysteine lipidation. Residues Pro29 to Ala82 are disordered. The span at Gln44 to Pro57 shows a compositional bias: pro residues.

It belongs to the LpoB family. Interacts with PBP1b.

Its subcellular location is the cell outer membrane. Functionally, regulator of peptidoglycan synthesis that is essential for the function of penicillin-binding protein 1B (PBP1b). The polypeptide is Penicillin-binding protein activator LpoB (Cronobacter turicensis (strain DSM 18703 / CCUG 55852 / LMG 23827 / z3032)).